A 331-amino-acid polypeptide reads, in one-letter code: UPF0284 protein PF0303 (331 aa).

It belongs to the UPF0284 family.

The chain is UPF0284 protein PF0303 from Pyrococcus furiosus (strain ATCC 43587 / DSM 3638 / JCM 8422 / Vc1).